Consider the following 327-residue polypeptide: Gonadotropin-releasing hormone receptor (327 aa).

Over 1–37 the chain is Extracellular; it reads MASASPEQNQNHCSAVNNSNMLMQGNLPTLTLSGKIR. An N-linked (GlcNAc...) asparagine glycan is attached at Asn17. Residues 38–57 traverse the membrane as a helical segment; that stretch reads VTVTFFLFLLSTIFNASFLL. The Cytoplasmic segment spans residues 58–76; the sequence is KLQKWTQKKEKGKKLSRMK. Residues 77 to 96 traverse the membrane as a helical segment; that stretch reads VLLKHLTLANLLETLIVMPL. The Extracellular portion of the chain corresponds to 97 to 114; the sequence is DGMWNITVQWYAGEFLCK. N-linked (GlcNAc...) asparagine glycosylation is present at Asn101. Cys113 and Cys195 are joined by a disulfide. The chain crosses the membrane as a helical span at residues 115–136; it reads VLSYLKLFSMYAPAFMMVVISL. Topologically, residues 137 to 163 are cytoplasmic; sequence DRSLAITRPLAMKNNGKLGQSMIGLAW. A helical membrane pass occupies residues 164–183; sequence LLSGIFAGPQLYIFRMIHLA. Topologically, residues 184–211 are extracellular; it reads DSSGQTEGFPQCVTHCSFPQWWHQAFYN. The chain crosses the membrane as a helical span at residues 212–231; that stretch reads FFTFSCLFIIPLFITLICNA. Residues 232-280 lie on the Cytoplasmic side of the membrane; it reads KIIFTLTRVLHQDPHELQLNQSKNNIPRARLRTLKMTVAFATSFTVCWT. A helical transmembrane segment spans residues 281–299; sequence PYYVLGIWYWFDPEMLNRV. Residues 300–305 are Extracellular-facing; it reads SDPVNH. Residues 306-325 form a helical membrane-spanning segment; sequence FFFLFALLNPCFDPLIYGYF. At 326-327 the chain is on the cytoplasmic side; sequence SL.

Belongs to the G-protein coupled receptor 1 family.

It is found in the cell membrane. Functionally, receptor for gonadotropin releasing hormone (GnRH) that mediates the action of GnRH to stimulate the secretion of the gonadotropic hormones luteinizing hormone (LH) and follicle-stimulating hormone (FSH). This receptor mediates its action by association with G-proteins that activate a phosphatidylinositol-calcium second messenger system. The polypeptide is Gonadotropin-releasing hormone receptor (GNRHR) (Canis lupus familiaris (Dog)).